We begin with the raw amino-acid sequence, 176 residues long: tRNA (adenine(37)-N6)-methyltransferase (176 aa).

A TsaA-like domain is found at 1–94 (SFSHIWVQFV…YLPFVEAQPD (94 aa)). S-adenosyl-L-methionine is bound by residues His12, 12-13 (HG), Arg40, Leu50, and 74-77 (LDGT).

This sequence belongs to the tRNA methyltransferase O family.

The catalysed reaction is N(6)-L-threonylcarbamoyladenosine(37) in tRNA + S-adenosyl-L-methionine = N(6)-methyl,N(6)-L-threonylcarbamoyladenosine(37) in tRNA + S-adenosyl-L-homocysteine + H(+). Functionally, S-adenosyl-L-methionine-dependent methyltransferase responsible for the addition of the methyl group in the formation of N6-methyl-N6-threonylcarbamoyladenosine at position 37 (m(6)t(6)A37) of the tRNA anticodon loop of tRNA(Thr)(GGU). The methyl group of m(6)t(6)A37 appears to slightly improve the efficiency of the tRNA decoding ability. Binds to tRNA. This chain is tRNA (adenine(37)-N6)-methyltransferase, found in Eikenella corrodens.